The sequence spans 175 residues: Protein LpfE (175 aa).

A signal peptide spans Met1–Ala20.

This sequence belongs to the fimbrial protein family.

The protein resides in the fimbrium. This Salmonella typhimurium (strain LT2 / SGSC1412 / ATCC 700720) protein is Protein LpfE (lpfE).